The chain runs to 203 residues: Thymidylate kinase (203 aa).

14-21 (GGEGSGKS) is a binding site for ATP.

This sequence belongs to the thymidylate kinase family.

The enzyme catalyses dTMP + ATP = dTDP + ADP. Its function is as follows. Phosphorylation of dTMP to form dTDP in both de novo and salvage pathways of dTTP synthesis. The sequence is that of Thymidylate kinase from Rickettsia canadensis (strain McKiel).